Here is a 371-residue protein sequence, read N- to C-terminus: Loganic acid O-methyltransferase (371 aa).

Residue Y31 participates in S-adenosyl-L-homocysteine binding. Residues Y37 and Q38 each contribute to the loganate site. 6 residues coordinate S-adenosyl-L-homocysteine: C78, N83, D114, H115, S141, and F142. Positions 162 and 163 each coordinate loganate. N180 is a binding site for Mg(2+). Loganate-binding residues include A241 and H245. Positions 267, 269, and 270 each coordinate Mg(2+). Residues Q273 and Q316 each coordinate loganate.

It belongs to the methyltransferase superfamily. Type-7 methyltransferase family. As to quaternary structure, homodimer. Mg(2+) serves as cofactor. As to expression, expressed in leaves (especially in leaf epidermis), flowers, siliques and stems, and, at low levels, in hairy roots.

The catalysed reaction is loganate + S-adenosyl-L-methionine = loganin + S-adenosyl-L-homocysteine. Its pathway is alkaloid biosynthesis. With respect to regulation, strongly repressed by loganin and slightly by S-adenosyl-L-homocysteine. Component of the seco-iridoid and derivatives monoterpenoid indole alkaloids (MIAs, e.g. vinblastine and ajmalicine) biosynthesis pathway. Catalyzes the methylation of loganic acid (6S,7R) to produce loganin. Weak activity with secologanic acid as substrate. Inactive on deoxyloganic, dehydrologanic, epiloganic and loganetic acid. The protein is Loganic acid O-methyltransferase of Catharanthus roseus (Madagascar periwinkle).